The sequence spans 391 residues: uncharacterized protein (391 aa).

The next 11 helical transmembrane spans lie at 15–35 (LSFC…LPIL), 48–68 (FLIG…QIPF), 81–101 (IIFG…TNSI), 139–159 (IIGV…PIIA), 167–187 (IFWI…FLIP), 217–237 (FYLG…IIPY), 251–271 (IVYF…VFYF), 275–295 (FFLK…LLLF), 303–323 (ICLT…EIFF), 346–366 (TSQF…CTFF), and 369–389 (NHIF…SFFC).

Belongs to the major facilitator superfamily.

The protein localises to the cell membrane. This is an uncharacterized protein from Buchnera aphidicola subsp. Schizaphis graminum (strain Sg).